A 97-amino-acid polypeptide reads, in one-letter code: Intermembrane phospholipid transport system binding protein MlaB (97 aa).

An STAS domain is found at 1–97 (MSESLSWMQT…YNLPADVLPR (97 aa)).

As to quaternary structure, the complex is composed of two ATP-binding proteins (MlaF), two transmembrane proteins (MlaE), two cytoplasmic solute-binding proteins (MlaB) and six periplasmic solute-binding proteins (MlaD).

The protein resides in the cytoplasm. Part of the ABC transporter complex MlaFEDB, which is involved in a phospholipid transport pathway that maintains lipid asymmetry in the outer membrane by retrograde trafficking of phospholipids from the outer membrane to the inner membrane. MlaB plays critical roles in both the assembly and activity of the complex. May act by modulating MlaF structure and stability. The polypeptide is Intermembrane phospholipid transport system binding protein MlaB (Escherichia coli (strain K12)).